The sequence spans 832 residues: Putative beta-glucosidase (832 aa).

D225 is an active-site residue. The region spanning 397–556 (TGKHGYVAKF…DPETEIDYAV (160 aa)) is the PA14 domain.

This sequence belongs to the glycosyl hydrolase 3 family.

The protein resides in the cytoplasm. It catalyses the reaction Hydrolysis of terminal, non-reducing beta-D-glucosyl residues with release of beta-D-glucose.. This Schizosaccharomyces pombe (strain 972 / ATCC 24843) (Fission yeast) protein is Putative beta-glucosidase.